A 227-amino-acid polypeptide reads, in one-letter code: Esterase OVCA2 (227 aa).

Residues 44–68 (GPHPVPDPPGPEGARSDFGSCPPEE) are disordered. Residues S119, D179, and H206 each act as charge relay system in the active site.

Belongs to the LovG family. Post-translationally, proteolytically degraded in response to RA and 4HPR treatment in a time- and dose-dependent manner in the promyelocytic leukemia cell line HL-60. Ubiquitously expressed.

The catalysed reaction is a carboxylic ester + H2O = an alcohol + a carboxylate + H(+). In terms of biological role, exhibits ester hydrolase activity with a strong preference for long-chain alkyl ester substrates and high selectivity against a variety of short, branched, and substituted esters. Is able to hydrolyze ester bonds within a wide range of p-nitrophenyl derivatives (C2-C14) in vitro, with a strong preference toward substrates of &gt;8 carbons. This is Esterase OVCA2 from Homo sapiens (Human).